A 149-amino-acid chain; its full sequence is Large ribosomal subunit protein uL24 (149 aa).

Residues 114–149 form a disordered region; the sequence is RKIIERSGGTPEVEAVPEKSEEEKEEKEKEEEKSEE. Basic and acidic residues predominate over residues 129 to 149; the sequence is VPEKSEEEKEEKEKEEEKSEE.

It belongs to the universal ribosomal protein uL24 family. Part of the 50S ribosomal subunit.

Functionally, one of two assembly initiator proteins, it binds directly to the 5'-end of the 23S rRNA, where it nucleates assembly of the 50S subunit. Its function is as follows. Located at the polypeptide exit tunnel on the outside of the subunit. The polypeptide is Large ribosomal subunit protein uL24 (Methanopyrus kandleri (strain AV19 / DSM 6324 / JCM 9639 / NBRC 100938)).